A 339-amino-acid polypeptide reads, in one-letter code: DNA-directed RNA polymerase subunit alpha (339 aa).

The tract at residues 1–233 is alpha N-terminal domain (alpha-NTD); it reads MVREEVAGST…DLFLPFLHAE (233 aa). Positions 266–339 are alpha C-terminal domain (alpha-CTD); the sequence is GIPLNCIFID…IDLLKNKLSF (74 aa).

It belongs to the RNA polymerase alpha chain family. In terms of assembly, in plastids the minimal PEP RNA polymerase catalytic core is composed of four subunits: alpha, beta, beta', and beta''. When a (nuclear-encoded) sigma factor is associated with the core the holoenzyme is formed, which can initiate transcription.

Its subcellular location is the plastid. The protein localises to the chloroplast. It carries out the reaction RNA(n) + a ribonucleoside 5'-triphosphate = RNA(n+1) + diphosphate. Functionally, DNA-dependent RNA polymerase catalyzes the transcription of DNA into RNA using the four ribonucleoside triphosphates as substrates. The polypeptide is DNA-directed RNA polymerase subunit alpha (Hordeum bulbosum (Bulbous barley)).